Consider the following 72-residue polypeptide: Translation initiation factor IF-1 (72 aa).

Positions 1–72 (MSKEEVLEFS…TKGRITYRYK (72 aa)) constitute an S1-like domain.

Belongs to the IF-1 family. Component of the 30S ribosomal translation pre-initiation complex which assembles on the 30S ribosome in the order IF-2 and IF-3, IF-1 and N-formylmethionyl-tRNA(fMet); mRNA recruitment can occur at any time during PIC assembly.

Its subcellular location is the cytoplasm. In terms of biological role, one of the essential components for the initiation of protein synthesis. Stabilizes the binding of IF-2 and IF-3 on the 30S subunit to which N-formylmethionyl-tRNA(fMet) subsequently binds. Helps modulate mRNA selection, yielding the 30S pre-initiation complex (PIC). Upon addition of the 50S ribosomal subunit IF-1, IF-2 and IF-3 are released leaving the mature 70S translation initiation complex. The sequence is that of Translation initiation factor IF-1 from Bartonella quintana (strain Toulouse) (Rochalimaea quintana).